We begin with the raw amino-acid sequence, 96 residues long: MEQAPEDQGPQREPNNEWTLEILEELKREAVRHFPRPWLHNLGQHIYTTYGDTWEGLEAIIRILQQLLFIHFRIGCHHSRIGIIPQRRGRNGSSRS.

The segment at 1–42 (MEQAPEDQGPQREPNNEWTLEILEELKREAVRHFPRPWLHNL) is homooligomerization. Serine 79, serine 94, and serine 96 each carry phosphoserine; by host.

This sequence belongs to the HIV-1 VPR protein family. As to quaternary structure, homooligomer, may form homodimer. Interacts with p6-gag region of the Pr55 Gag precursor protein through a (Leu-X-X)4 motif near the C-terminus of the P6gag protein. Interacts with host UNG. May interact with host RAD23A/HHR23A. Interacts with host VPRBP/DCAF1, leading to hijack the CUL4A-RBX1-DDB1-DCAF1/VPRBP complex, mediating ubiquitination of host proteins such as TERT and ZGPAT and arrest of the cell cycle in G2 phase. Phosphorylated on several residues by host. These phosphorylations regulate VPR activity for the nuclear import of the HIV-1 pre-integration complex.

The protein localises to the virion. Its subcellular location is the host nucleus. It is found in the host extracellular space. During virus replication, may deplete host UNG protein, and incude G2-M cell cycle arrest. Acts by targeting specific host proteins for degradation by the 26S proteasome, through association with the cellular CUL4A-DDB1 E3 ligase complex by direct interaction with host VPRPB/DCAF-1. Cell cycle arrest reportedly occurs within hours of infection and is not blocked by antiviral agents, suggesting that it is initiated by the VPR carried into the virion. Additionally, VPR induces apoptosis in a cell cycle dependent manner suggesting that these two effects are mechanistically linked. Detected in the serum and cerebrospinal fluid of AIDS patient, VPR may also induce cell death to bystander cells. Its function is as follows. During virus entry, plays a role in the transport of the viral pre-integration (PIC) complex to the host nucleus. This function is crucial for viral infection of non-dividing macrophages. May act directly at the nuclear pore complex, by binding nucleoporins phenylalanine-glycine (FG)-repeat regions. This is Protein Vpr from Human immunodeficiency virus type 1 group M subtype K (isolate 96CM-MP535) (HIV-1).